The chain runs to 1956 residues: Histone-lysine N-methyltransferase SETD1B (1956 aa).

The segment covering 1 to 20 has biased composition (basic and acidic residues); sequence MSFKEAKPGERGKNPEDHGR. The segment at 1 to 46 is disordered; that stretch reads MSFKEAKPGERGKNPEDHGRKQTASWINGMEAGNQPSTSGEKKSHH. The RRM domain maps to 111-199; sequence DEFYVGPVPP…NIIHVELDTK (89 aa). Disordered stretches follow at residues 226 to 478, 502 to 637, 662 to 696, 926 to 1148, 1341 to 1386, 1420 to 1464, 1512 to 1553, 1627 to 1655, and 1766 to 1790; these read LDAS…LEAE, IAGD…VTPS, GFPP…VTVP, KEPP…DEMQ, EDLP…TLTS, PTFP…VPSP, HLTS…NYET, TKHK…FSPP, and IDTQ…RRSE. 3 stretches are compositionally biased toward polar residues: residues 254–290, 298–312, and 346–361; these read VTPN…QGTP, PFSQ…QTTP, and SSGS…NVTR. Pro residues predominate over residues 363 to 373; sequence QPEPVQVPRTP. 3 stretches are compositionally biased toward polar residues: residues 375–407, 416–432, and 451–464; these read LSHS…PQTS, GPQT…NSAS, and DSTT…SQTP. The segment covering 517-527 has biased composition (low complexity); that stretch reads SPISSSSSQLS. Composition is skewed to polar residues over residues 535–551 and 575–593; these read GSRY…SSTG and SLCQ…NQSG. The span at 594-605 shows a compositional bias: basic and acidic residues; it reads RKTESLDKKELV. The span at 625 to 634 shows a compositional bias: acidic residues; sequence EDMEISDDEV. A compositionally biased stretch (acidic residues) spans 986–1000; sequence SEGEEEVESEGDDGE. Basic and acidic residues predominate over residues 1001–1011; that stretch reads TSDKEDSSSEK. Positions 1068–1122 are enriched in acidic residues; that stretch reads DSSDESEESSEYESSSDSDEKEEEDDEEEELVFGDDQSEDQDLGQEYEVETDREE. Over residues 1341-1352 the composition is skewed to basic and acidic residues; it reads EDLPRTPGRDIV. Polar residues-rich tracts occupy residues 1358 to 1367 and 1450 to 1462; these read LGKSQSTETV and EPTS…NSVP. Residues 1541 to 1551 are compositionally biased toward basic and acidic residues; the sequence is SAHEFETEKNY. Basic residues predominate over residues 1628–1638; it reads KHKKSRNSRHN. The segment covering 1769-1783 has biased composition (polar residues); that stretch reads QGKSIPAQPQASTRA. The short motif at 1788–1793 is the RxxxRR motif element; it reads RSEQRR. An SET domain is found at 1817–1934; sequence KKLRFCKSHI…VNEEITYDYK (118 aa). Residue Tyr-1933 participates in S-adenosyl-L-methionine binding. In terms of domain architecture, Post-SET spans 1940 to 1956; the sequence is VKIPCLCGAENCRGTLN.

It belongs to the class V-like SAM-binding methyltransferase superfamily. As to quaternary structure, component of the SET1B/COMPASS complex.

The protein resides in the nucleus speckle. Its subcellular location is the chromosome. The catalysed reaction is L-lysyl(4)-[histone H3] + 3 S-adenosyl-L-methionine = N(6),N(6),N(6)-trimethyl-L-lysyl(4)-[histone H3] + 3 S-adenosyl-L-homocysteine + 3 H(+). Its function is as follows. Histone methyltransferase that specifically methylates 'Lys-4' of histone H3, when part of the SET1 histone methyltransferase (HMT) complex, but not if the neighboring 'Lys-9' residue is already methylated. H3 'Lys-4' methylation represents a specific tag for epigenetic transcriptional activation. The chain is Histone-lysine N-methyltransferase SETD1B (setd1b) from Xenopus tropicalis (Western clawed frog).